A 558-amino-acid polypeptide reads, in one-letter code: Small ribosomal subunit protein bS1 (558 aa).

S1 motif domains lie at 21–87 (GSII…LSRE), 105–171 (SETV…VSRR), 192–260 (GMHV…LGLK), 277–347 (ETKL…LGLK), 364–434 (GVHV…LGIK), and 451–520 (GAII…LTIH).

The protein belongs to the bacterial ribosomal protein bS1 family.

Binds mRNA; thus facilitating recognition of the initiation point. It is needed to translate mRNA with a short Shine-Dalgarno (SD) purine-rich sequence. In Buchnera aphidicola subsp. Acyrthosiphon pisum (strain APS) (Acyrthosiphon pisum symbiotic bacterium), this protein is Small ribosomal subunit protein bS1 (rpsA).